Consider the following 49-residue polypeptide: Large ribosomal subunit protein eL40 (49 aa).

It belongs to the eukaryotic ribosomal protein eL40 family.

In Archaeoglobus fulgidus (strain ATCC 49558 / DSM 4304 / JCM 9628 / NBRC 100126 / VC-16), this protein is Large ribosomal subunit protein eL40.